A 927-amino-acid polypeptide reads, in one-letter code: Echinoderm microtubule-associated protein-like 4 (927 aa).

The microtubule-binding stretch occupies residues Met-1–Asp-189. A coiled-coil region spans residues Ala-14 to Arg-63. Positions Asn-85 to Arg-132 are disordered. The span at Ser-116 to Arg-132 shows a compositional bias: basic and acidic residues. WD repeat units lie at residues Leu-199 to Tyr-237, Thr-241 to Ser-288, Val-296 to Trp-336, Ala-343 to Trp-378, Arg-385 to Lys-424, Gln-442 to His-480, Glu-485 to Thr-521, Asp-524 to Ser-563, Ser-567 to Ala-604, Val-610 to Val-646, Tyr-653 to Ile-692, Arg-702 to Tyr-760, and Ala-767 to Leu-806. A compositionally biased stretch (polar residues) spans Asn-815 to Val-829. Residues Asn-815 to Ser-927 form a disordered region. Positions Ala-914–Ser-927 are enriched in acidic residues.

This sequence belongs to the WD repeat EMAP family. Homotrimer; self-association is mediated by the N-terminal coiled coil.

It is found in the cytoplasm. It localises to the cytoskeleton. Its subcellular location is the spindle. The protein localises to the microtubule organizing center. The protein resides in the midbody. Functionally, essential for the formation and stability of microtubules (MTs). Required for the organization of the mitotic spindle and for the proper attachment of kinetochores to MTs. Promotes the recruitment of NUDC to the mitotic spindle for mitotic progression. The polypeptide is Echinoderm microtubule-associated protein-like 4 (eml4) (Xenopus laevis (African clawed frog)).